The primary structure comprises 460 residues: GTPase Der (460 aa).

EngA-type G domains follow at residues 3–167 (FTFA…PEPD) and 189–364 (IRVA…AVWN). Residues 9 to 16 (GRPNVGKS), 56 to 60 (DTAGL), 119 to 122 (NKSE), 195 to 202 (GRPNAGKS), 242 to 246 (DTAGL), and 307 to 310 (NKWD) contribute to the GTP site. The region spanning 365 to 449 (TRVPTAALNR…PVRIMLREKA (85 aa)) is the KH-like domain.

It belongs to the TRAFAC class TrmE-Era-EngA-EngB-Septin-like GTPase superfamily. EngA (Der) GTPase family. In terms of assembly, associates with the 50S ribosomal subunit.

Its function is as follows. GTPase that plays an essential role in the late steps of ribosome biogenesis. The sequence is that of GTPase Der from Rhodopseudomonas palustris (strain BisB5).